A 274-amino-acid chain; its full sequence is Formamidopyrimidine-DNA glycosylase (274 aa).

Catalysis depends on Pro-2, which acts as the Schiff-base intermediate with DNA. Glu-3 serves as the catalytic Proton donor. Catalysis depends on Lys-57, which acts as the Proton donor; for beta-elimination activity. 3 residues coordinate DNA: His-92, Arg-111, and Lys-152. The FPG-type zinc finger occupies Gln-237–Pro-271. The active-site Proton donor; for delta-elimination activity is the Arg-261.

It belongs to the FPG family. As to quaternary structure, monomer. Zn(2+) is required as a cofactor.

The catalysed reaction is Hydrolysis of DNA containing ring-opened 7-methylguanine residues, releasing 2,6-diamino-4-hydroxy-5-(N-methyl)formamidopyrimidine.. The enzyme catalyses 2'-deoxyribonucleotide-(2'-deoxyribose 5'-phosphate)-2'-deoxyribonucleotide-DNA = a 3'-end 2'-deoxyribonucleotide-(2,3-dehydro-2,3-deoxyribose 5'-phosphate)-DNA + a 5'-end 5'-phospho-2'-deoxyribonucleoside-DNA + H(+). Its function is as follows. Involved in base excision repair of DNA damaged by oxidation or by mutagenic agents. Acts as a DNA glycosylase that recognizes and removes damaged bases. Has a preference for oxidized purines, such as 7,8-dihydro-8-oxoguanine (8-oxoG). Has AP (apurinic/apyrimidinic) lyase activity and introduces nicks in the DNA strand. Cleaves the DNA backbone by beta-delta elimination to generate a single-strand break at the site of the removed base with both 3'- and 5'-phosphates. The sequence is that of Formamidopyrimidine-DNA glycosylase from Haemophilus ducreyi (strain 35000HP / ATCC 700724).